Reading from the N-terminus, the 355-residue chain is UDP-N-acetylglucosamine--N-acetylmuramyl-(pentapeptide) pyrophosphoryl-undecaprenol N-acetylglucosamine transferase (355 aa).

Residues 14–16 (TGG), Asn126, Arg162, Ser190, Ile244, and Gln289 each bind UDP-N-acetyl-alpha-D-glucosamine.

It belongs to the glycosyltransferase 28 family. MurG subfamily.

Its subcellular location is the cell inner membrane. The enzyme catalyses di-trans,octa-cis-undecaprenyl diphospho-N-acetyl-alpha-D-muramoyl-L-alanyl-D-glutamyl-meso-2,6-diaminopimeloyl-D-alanyl-D-alanine + UDP-N-acetyl-alpha-D-glucosamine = di-trans,octa-cis-undecaprenyl diphospho-[N-acetyl-alpha-D-glucosaminyl-(1-&gt;4)]-N-acetyl-alpha-D-muramoyl-L-alanyl-D-glutamyl-meso-2,6-diaminopimeloyl-D-alanyl-D-alanine + UDP + H(+). It functions in the pathway cell wall biogenesis; peptidoglycan biosynthesis. Cell wall formation. Catalyzes the transfer of a GlcNAc subunit on undecaprenyl-pyrophosphoryl-MurNAc-pentapeptide (lipid intermediate I) to form undecaprenyl-pyrophosphoryl-MurNAc-(pentapeptide)GlcNAc (lipid intermediate II). The polypeptide is UDP-N-acetylglucosamine--N-acetylmuramyl-(pentapeptide) pyrophosphoryl-undecaprenol N-acetylglucosamine transferase (Paracidovorax citrulli (strain AAC00-1) (Acidovorax citrulli)).